Consider the following 776-residue polypeptide: Photosystem I P700 chlorophyll a apoprotein A1 (776 aa).

8 helical membrane-spanning segments follow: residues 76–99 (IFSA…FHGA), 162–185 (LMAL…FHYH), 201–225 (LQHH…HVAN), 309–327 (VAHH…GHVY), 368–391 (WHAQ…HHMY), 407–433 (LGLF…IAVI), 455–477 (AIIS…LYIH), and 557–575 (LMIH…LILL). [4Fe-4S] cluster contacts are provided by Cys-599 and Cys-608. The next 2 membrane-spanning stretches (helical) occupy residues 615–636 (HVFL…YFSW) and 690–712 (LSGY…MFLF). His-701 provides a ligand contact to divinylchlorophyll a'. Residues Met-709 and Tyr-717 each contribute to the divinyl chlorophyll a site. Phylloquinone is bound at residue Trp-718. Residues 750-770 (AVGVTHFLFGGIVTTWAFFHA) traverse the membrane as a helical segment.

The protein belongs to the PsaA/PsaB family. The PsaA/B heterodimer binds the P700 divinyl chlorophyll special pair and subsequent electron acceptors. PSI consists of a core antenna complex that captures photons, and an electron transfer chain that converts photonic excitation into a charge separation. The cyanobacterial PSI reaction center is composed of one copy each of PsaA,B,C,D,E,F,I,J,K,L,M and X, and forms trimeric complexes. PSI electron transfer chain: 5 divinyl chlorophyll a, 1 divinyl chlorophyll a', 2 phylloquinones and 3 4Fe-4S clusters. PSI core antenna: 90 divinyl chlorophyll a, 22 carotenoids, 3 phospholipids and 1 galactolipid. P700 is a divinyl chlorophyll a/divinyl chlorophyll a' dimer, A0 is one or more divinyl chlorophyll a, A1 is one or both phylloquinones and FX is a shared 4Fe-4S iron-sulfur center. serves as cofactor.

Its subcellular location is the cellular thylakoid membrane. The enzyme catalyses reduced [plastocyanin] + hnu + oxidized [2Fe-2S]-[ferredoxin] = oxidized [plastocyanin] + reduced [2Fe-2S]-[ferredoxin]. Its function is as follows. PsaA and PsaB bind P700, the primary electron donor of photosystem I (PSI), as well as the electron acceptors A0, A1 and FX. PSI is a plastocyanin/cytochrome c6-ferredoxin oxidoreductase, converting photonic excitation into a charge separation, which transfers an electron from the donor P700 chlorophyll pair to the spectroscopically characterized acceptors A0, A1, FX, FA and FB in turn. Oxidized P700 is reduced on the lumenal side of the thylakoid membrane by plastocyanin or cytochrome c6. The chain is Photosystem I P700 chlorophyll a apoprotein A1 from Prochlorococcus marinus (strain MIT 9303).